The chain runs to 298 residues: MSLCVAPRHPTGAAAALGLGSLLVLLGPGRACPAGCACTDPHTVDCRDRGLPSVPDPFPLDVRKLLVAGNRIQQIPEDFFIFHGDLVYLDFRNNSLRSLEEGTFSGSGKLAFLDLSYNNLTQLGAGAFRSAGRLVKLSLANNHLAGVHEAAFESLESLQVLELNDNNLRSLNVAALDALPALRTVRLDGNPWLCDCDFAHLFSWIQENTSKLPKGLDAIQCSLPMEDRRVALRELSEASFSECKFSLSLTDLFIIIFSGVAVSIAAIISSFFLATVVQCFQRCAPNKDTEDEDDDEDD.

An N-terminal signal peptide occupies residues 1 to 31 (MSLCVAPRHPTGAAAALGLGSLLVLLGPGRA). Intrachain disulfides connect C32/C38 and C36/C46. In terms of domain architecture, LRRNT spans 32–60 (CPAGCACTDPHTVDCRDRGLPSVPDPFPL). Over 32–251 (CPAGCACTDP…ECKFSLSLTD (220 aa)) the chain is Extracellular. LRR repeat units lie at residues 61-82 (DVRK…FFIF), 85-106 (DLVY…TFSG), 109-130 (KLAF…AFRS), 133-154 (RLVK…AFES), and 157-177 (SLQV…AALD). N119 carries an N-linked (GlcNAc...) asparagine glycan. In terms of domain architecture, LRRCT spans 190–245 (NPWLCDCDFAHLFSWIQENTSKLPKGLDAIQCSLPMEDRRVALRELSEASFSECKF). 2 disulfides stabilise this stretch: C194–C221 and C196–C243. A helical membrane pass occupies residues 252–272 (LFIIIFSGVAVSIAAIISSFF). Over 273-298 (LATVVQCFQRCAPNKDTEDEDDDEDD) the chain is Cytoplasmic.

In terms of assembly, interacts with KCNMA1.

The protein resides in the cell membrane. Auxiliary protein of the large-conductance, voltage and calcium-activated potassium channel (BK alpha). Modulates gating properties by producing a marked shift in the BK channel's voltage dependence of activation in the hyperpolarizing direction, and in the absence of calcium. The polypeptide is Leucine-rich repeat-containing protein 38 (Lrrc38) (Mus musculus (Mouse)).